The chain runs to 620 residues: Glutathione-regulated potassium-efflux system protein KefC (620 aa).

A run of 12 helical transmembrane segments spans residues 4 to 24 (HTLMQALIYLGSAALIVPIAV), 26 to 46 (LGLGSVLGYLIAGCIIGPWGL), 54 to 74 (SILHFAEIGVVLMLFVIGLEL), 90 to 110 (GALQMVICGGLIGFFCMFLGL), 114 to 134 (VAELIGMTLALSSTAIAMQAM), 149 to 169 (FAVLLFQDIAAIPLVAMIPLL), 178 to 198 (LGAFALSALKVAGALALVVLL), 218 to 238 (VFSAVALFLVFGFGLLLEEVG), 270 to 290 (GLLLGLFFIGVGMSIDFGTLV), 294 to 314 (LRILLLLAGFLAIKIVMLWLI), 327 to 347 (WFAVLLGQGSEFAFVVFGAAQ), and 359 to 379 (ALTLAVALSMAATPIFLVLLT). Residues 399–518 (QPRVIVAGFG…AGVAMPERET (120 aa)) form the RCK N-terminal domain. Positions 599-620 (QGTAEGKHTGDIADEPQVKPST) are disordered.

It belongs to the monovalent cation:proton antiporter 2 (CPA2) transporter (TC 2.A.37) family. KefC subfamily. Homodimer. Interacts with the regulatory subunit KefF.

The protein resides in the cell inner membrane. Functionally, pore-forming subunit of a potassium efflux system that confers protection against electrophiles. Catalyzes K(+)/H(+) antiport. In Salmonella arizonae (strain ATCC BAA-731 / CDC346-86 / RSK2980), this protein is Glutathione-regulated potassium-efflux system protein KefC.